Here is a 39-residue protein sequence, read N- to C-terminus: Potassium channel toxin alpha-KTx 2.24 (39 aa).

3 disulfide bridges follow: Cys-7–Cys-29, Cys-13–Cys-34, and Cys-17–Cys-36.

Belongs to the short scorpion toxin superfamily. Potassium channel inhibitor family. Alpha-KTx 02 subfamily. As to expression, expressed by the venom gland.

It localises to the secreted. In terms of biological role, blocks human voltage-gated potassium (Kv) channels Kv1.1/KCNA, Kv1.2/KCNA2 and Kv1.3/KCNA3. Exhibits high affinity for Kv1.2/KCNA2 and selectivity over Kv1.1/KCNA and Kv1.3/KCNA3. The sequence is that of Potassium channel toxin alpha-KTx 2.24 from Centruroides bonito (Scorpion).